The primary structure comprises 86 residues: DNA-directed RNA polymerase subunit omega (86 aa).

The protein belongs to the RNA polymerase subunit omega family. The RNAP catalytic core consists of 2 alpha, 1 beta, 1 beta' and 1 omega subunit. When a sigma factor is associated with the core the holoenzyme is formed, which can initiate transcription.

The catalysed reaction is RNA(n) + a ribonucleoside 5'-triphosphate = RNA(n+1) + diphosphate. Promotes RNA polymerase assembly. Latches the N- and C-terminal regions of the beta' subunit thereby facilitating its interaction with the beta and alpha subunits. The sequence is that of DNA-directed RNA polymerase subunit omega from Psychrobacter arcticus (strain DSM 17307 / VKM B-2377 / 273-4).